A 124-amino-acid chain; its full sequence is Small ribosomal subunit protein uS12 (124 aa).

The segment at 1-28 (MPTIQQLIRSERSKAKKKTKSPALKQCP) is disordered. The residue at position 89 (aspartate 89) is a 3-methylthioaspartic acid. The segment at 101 to 124 (TLDAQGVKDRKQGRSKYGTKKPKE) is disordered. Residues 113 to 124 (GRSKYGTKKPKE) are compositionally biased toward basic residues.

The protein belongs to the universal ribosomal protein uS12 family. In terms of assembly, part of the 30S ribosomal subunit. Contacts proteins S8 and S17. May interact with IF1 in the 30S initiation complex.

With S4 and S5 plays an important role in translational accuracy. In terms of biological role, interacts with and stabilizes bases of the 16S rRNA that are involved in tRNA selection in the A site and with the mRNA backbone. Located at the interface of the 30S and 50S subunits, it traverses the body of the 30S subunit contacting proteins on the other side and probably holding the rRNA structure together. The combined cluster of proteins S8, S12 and S17 appears to hold together the shoulder and platform of the 30S subunit. The polypeptide is Small ribosomal subunit protein uS12 (Crocosphaera subtropica (strain ATCC 51142 / BH68) (Cyanothece sp. (strain ATCC 51142))).